The sequence spans 581 residues: Prolactin receptor (581 aa).

The first 24 residues, 1-24, serve as a signal peptide directing secretion; sequence MKENVASRAVFILLLFLNASLLNG. At 25–234 the chain is on the extracellular side; the sequence is QSPPGKPKII…QIPNDFPVND (210 aa). 2 consecutive Fibronectin type-III domains span residues 27–127 and 129–229; these read PPGK…IVEP and PPAN…IPND. C36 and C46 are disulfide-bonded. Residue N59 is glycosylated (N-linked (GlcNAc...) asparagine). The cysteines at positions 75 and 86 are disulfide-linked. The N-linked (GlcNAc...) asparagine glycan is linked to N132. D211 and H212 together coordinate Zn(2+). Residues 215 to 219 carry the WSXWS motif motif; sequence WSEWS. An N-linked (GlcNAc...) asparagine glycan is attached at N233. The helical transmembrane segment at 235–258 threads the bilayer; that stretch reads TTVWIFVAVLSAVICLIMVWAVAL. Residues 259–581 are Cytoplasmic-facing; sequence KGYSMMTCIL…PAKEAPPALP (323 aa). The Box 1 motif motif lies at 267-275; the sequence is ILPPVPGPK. 2 disordered regions span residues 321–362 and 462–502; these read EDQQ…LFSE and LKPS…QDKT. Residues 329–349 are compositionally biased toward basic and acidic residues; sequence PSKEHMEQGVKPMHMDPDSDS.

This sequence belongs to the type I cytokine receptor family. Type 1 subfamily. In terms of assembly, interacts with SMARCA1. Interacts with NEK3 and VAV2 and this interaction is prolactin-dependent.

Its subcellular location is the membrane. Functionally, this is a receptor for the anterior pituitary hormone prolactin. This chain is Prolactin receptor (PRLR), found in Cervus elaphus (Red deer).